The following is a 609-amino-acid chain: Cell division protein DipM (609 aa).

A signal peptide spans 1 to 24; the sequence is MRQLWTQAAVIALTAGTLGAPAHA. A disordered region spans residues 21-103; it reads PAHASGQSGQ…PVLRATPPRT (83 aa). A compositionally biased stretch (polar residues) spans 25–38; the sequence is SGQSGQRFTPNFPI. Over residues 79 to 93 the composition is skewed to pro residues; sequence LPPPAPVSTPAPAPQ. LysM domains lie at 121–165 and 171–215; these read QVRV…KIKG and KAYV…KLLL. Composition is skewed to low complexity over residues 242–258 and 265–280; these read AEPAPATTRPATPAATP and PVSEETSEPATTSTTT. The disordered stretch occupies residues 242–280; it reads AEPAPATTRPATPAATPSRPVRQPVSEETSEPATTSTTT. LysM domains lie at 295-339 and 345-389; these read QVHT…KIKG and KAYS…KIAL. The disordered stretch occupies residues 389–457; the sequence is LPDGFRDKGP…AAQPITPPPS (69 aa). The segment covering 400 to 429 has biased composition (low complexity); sequence RTTTTTRPATPPANTYARVDSSAAAASTPS. The lytM stretch occupies residues 503–603; sequence NDGLNIRAPQ…VKDKAKPVDP (101 aa).

Its subcellular location is the periplasm. Required for efficient cell division, cell polarity and normal cell morphology. Facilitates remodeling of the peptidoglycan layer and, thus, coordinated constriction of the cell envelope during the division process. Plays a critical role in maintaining proper cell envelope architecture during growth and division. Required for normal envelope invagination during cell division and to establish or maintain outer membrane connections throughout the cell envelope. May serve as a regulatory hub coordinating the activities of multiple peptidoglycan-degrading enzymes during cell constriction. Required to position SdpA and SdpB at midcell. This Caulobacter vibrioides (strain NA1000 / CB15N) (Caulobacter crescentus) protein is Cell division protein DipM.